Consider the following 456-residue polypeptide: Trigger factor (456 aa).

A PPIase FKBP-type domain is found at 166–245 (GDYANIDLNA…VNSVKAEELP (80 aa)).

It belongs to the FKBP-type PPIase family. Tig subfamily.

The protein resides in the cytoplasm. It catalyses the reaction [protein]-peptidylproline (omega=180) = [protein]-peptidylproline (omega=0). In terms of biological role, involved in protein export. Acts as a chaperone by maintaining the newly synthesized protein in an open conformation. Functions as a peptidyl-prolyl cis-trans isomerase. This chain is Trigger factor, found in Bifidobacterium adolescentis (strain ATCC 15703 / DSM 20083 / NCTC 11814 / E194a).